A 103-amino-acid chain; its full sequence is Large ribosomal subunit protein bL21 (103 aa).

This sequence belongs to the bacterial ribosomal protein bL21 family. Part of the 50S ribosomal subunit. Contacts protein L20.

This protein binds to 23S rRNA in the presence of protein L20. This Enterobacter sp. (strain 638) protein is Large ribosomal subunit protein bL21.